Consider the following 247-residue polypeptide: Probable transcriptional regulatory protein PC1_1817 (247 aa).

It belongs to the TACO1 family.

The protein resides in the cytoplasm. The protein is Probable transcriptional regulatory protein PC1_1817 of Pectobacterium carotovorum subsp. carotovorum (strain PC1).